We begin with the raw amino-acid sequence, 812 residues long: DNA translocase FtsK 1 (812 aa).

Residues Met-1–Lys-11 are compositionally biased toward basic residues. Residues Met-1–Val-36 form a disordered region. Over residues Lys-25 to Val-36 the composition is skewed to basic and acidic residues. 5 consecutive transmembrane segments (helical) span residues Ile-63–Ile-83, Val-116–Leu-136, Ile-156–Leu-176, Leu-184–Leu-204, and Leu-210–Leu-230. Over Glu-231–Leu-812 the chain is Cytoplasmic. Residues Gly-461–Arg-670 enclose the FtsK domain. An ATP-binding site is contributed by Gly-481–Val-486.

The protein belongs to the FtsK/SpoIIIE/SftA family. Homohexamer. Forms a ring that surrounds DNA.

The protein localises to the cell inner membrane. In terms of biological role, essential cell division protein that coordinates cell division and chromosome segregation. The N-terminus is involved in assembly of the cell-division machinery. The C-terminus functions as a DNA motor that moves dsDNA in an ATP-dependent manner towards the dif recombination site, which is located within the replication terminus region. Translocation stops specifically at Xer-dif sites, where FtsK interacts with the Xer recombinase, allowing activation of chromosome unlinking by recombination. FtsK orienting polar sequences (KOPS) guide the direction of DNA translocation. FtsK can remove proteins from DNA as it translocates, but translocation stops specifically at XerCD-dif site, thereby preventing removal of XerC and XerD from dif. This Neisseria meningitidis serogroup A / serotype 4A (strain DSM 15465 / Z2491) protein is DNA translocase FtsK 1 (ftsK1).